Here is a 182-residue protein sequence, read N- to C-terminus: Proline-rich protein, Y-linked (182 aa).

Disordered regions lie at residues 1 to 22 (MMRR…KPRD) and 89 to 108 (VPAD…PPPG). Residues 91–108 (ADPPPASPYRTSPRPPPG) are compositionally biased toward pro residues. Residues 154-167 (WMKLETIILSKLSQ) form the DUF1725 domain.

In Homo sapiens (Human), this protein is Proline-rich protein, Y-linked (PRORY).